A 164-amino-acid chain; its full sequence is Class I hydrophobin rodA (164 aa).

The signal sequence occupies residues 1 to 18 (MRFSISALVLGLAATVYA). Asparagine 50 is a glycosylation site (N-linked (GlcNAc...) asparagine). 4 disulfides stabilise this stretch: cysteine 60-cysteine 138, cysteine 68-cysteine 132, cysteine 69-cysteine 109, and cysteine 139-cysteine 157.

This sequence belongs to the fungal hydrophobin family. As to quaternary structure, self-assembles to form functional amyloid fibrils called rodlets. Self-assembly into fibrillar rodlets occurs spontaneously at hydrophobic:hydrophilic interfaces and the rodlets further associate laterally to form amphipathic monolayers.

Its subcellular location is the secreted. It is found in the cell wall. In terms of biological role, aerial growth, conidiation, and dispersal of filamentous fungi in the environment rely upon a capability of their secreting small amphipathic proteins called hydrophobins (HPBs) with low sequence identity. Class I can self-assemble into an outermost layer of rodlet bundles on aerial cell surfaces, conferring cellular hydrophobicity that supports fungal growth, development and dispersal; whereas Class II form highly ordered films at water-air interfaces through intermolecular interactions but contribute nothing to the rodlet structure. RodA is a class I hydrophobin involved in the cell surface hydrophobicity and conidiation under aerial conditions. The surface rodlet layer of the conidial cell wall makes airborne conidia of filamentous fungi inert to both innate and adaptive immunity. In Penicillium camembertii, this protein is Class I hydrophobin rodA.